Consider the following 348-residue polypeptide: Succinylglutamate desuccinylase (348 aa).

Residues His67, Glu70, and His164 each contribute to the Zn(2+) site. Glu228 is an active-site residue.

The protein belongs to the AspA/AstE family. Succinylglutamate desuccinylase subfamily. Requires Zn(2+) as cofactor.

It catalyses the reaction N-succinyl-L-glutamate + H2O = L-glutamate + succinate. It functions in the pathway amino-acid degradation; L-arginine degradation via AST pathway; L-glutamate and succinate from L-arginine: step 5/5. In terms of biological role, transforms N(2)-succinylglutamate into succinate and glutamate. The sequence is that of Succinylglutamate desuccinylase from Shewanella denitrificans (strain OS217 / ATCC BAA-1090 / DSM 15013).